The primary structure comprises 212 residues: Imidazole glycerol phosphate synthase subunit HisH (212 aa).

In terms of domain architecture, Glutamine amidotransferase type-1 spans 1-211; the sequence is MIGVIDYGMG…TKMAAEQQVK (211 aa). The active-site Nucleophile is the Cys-79. Residues His-186 and Glu-188 contribute to the active site.

In terms of assembly, heterodimer of HisH and HisF.

It is found in the cytoplasm. The enzyme catalyses 5-[(5-phospho-1-deoxy-D-ribulos-1-ylimino)methylamino]-1-(5-phospho-beta-D-ribosyl)imidazole-4-carboxamide + L-glutamine = D-erythro-1-(imidazol-4-yl)glycerol 3-phosphate + 5-amino-1-(5-phospho-beta-D-ribosyl)imidazole-4-carboxamide + L-glutamate + H(+). The catalysed reaction is L-glutamine + H2O = L-glutamate + NH4(+). It functions in the pathway amino-acid biosynthesis; L-histidine biosynthesis; L-histidine from 5-phospho-alpha-D-ribose 1-diphosphate: step 5/9. IGPS catalyzes the conversion of PRFAR and glutamine to IGP, AICAR and glutamate. The HisH subunit catalyzes the hydrolysis of glutamine to glutamate and ammonia as part of the synthesis of IGP and AICAR. The resulting ammonia molecule is channeled to the active site of HisF. The sequence is that of Imidazole glycerol phosphate synthase subunit HisH from Bacillus velezensis (strain DSM 23117 / BGSC 10A6 / LMG 26770 / FZB42) (Bacillus amyloliquefaciens subsp. plantarum).